We begin with the raw amino-acid sequence, 326 residues long: DNA-directed RNA polymerase subunit alpha (326 aa).

The alpha N-terminal domain (alpha-NTD) stretch occupies residues 1–231 (MQSNSLLKPR…DQLSVFADLE (231 aa)). Residues 245 to 326 (IDPVLLRPVD…WPPAGLEKLG (82 aa)) are alpha C-terminal domain (alpha-CTD).

Belongs to the RNA polymerase alpha chain family. In terms of assembly, homodimer. The RNAP catalytic core consists of 2 alpha, 1 beta, 1 beta' and 1 omega subunit. When a sigma factor is associated with the core the holoenzyme is formed, which can initiate transcription.

The catalysed reaction is RNA(n) + a ribonucleoside 5'-triphosphate = RNA(n+1) + diphosphate. Functionally, DNA-dependent RNA polymerase catalyzes the transcription of DNA into RNA using the four ribonucleoside triphosphates as substrates. The polypeptide is DNA-directed RNA polymerase subunit alpha (Aromatoleum aromaticum (strain DSM 19018 / LMG 30748 / EbN1) (Azoarcus sp. (strain EbN1))).